The primary structure comprises 273 residues: MNSDSSSVSSRASSPDMDEMYLRDHHHRHHHHHQESRLNSVSSTQGDMVQKMPGESLSRAGAKAAGESSKYKIKKQLSEQDLQQLRLKINGRERKRMHDLNLAMDGLREVMPYAHGPSVRKLSKIATLLLARNYILMLTSSLEEMKRLVGEIYGGHHSAFHCGTVGHSAGHPAHAANAVHPVHPILGGALSSGNASSPLSATSLPTIGTIRPPHSLLKAPSTPPALQLGSGFQHWAGLPCPCTICQMPPPPHLSALSTANMARLSAESKDLLK.

Low complexity predominate over residues 1–14 (MNSDSSSVSSRASS). Residues 1 to 72 (MNSDSSSVSS…KAAGESSKYK (72 aa)) are disordered. Residues 24-34 (DHHHRHHHHHQ) show a composition bias toward basic residues. The span at 37 to 47 (RLNSVSSTQGD) shows a compositional bias: polar residues. Residues 69–90 (SKYKIKKQLSEQDLQQLRLKIN) adopt a coiled-coil conformation. The bHLH domain maps to 84 to 138 (QLRLKINGRERKRMHDLNLAMDGLREVMPYAHGPSVRKLSKIATLLLARNYILML).

As to expression, weakly expressed, mainly in non-neural tissues.

The protein localises to the nucleus. May determine the distinct specification program of class A neurons in the dorsal part of the spinal cord and suppress specification of class B neurons. The sequence is that of Oligodendrocyte transcription factor 3 (Olig3) from Mus musculus (Mouse).